The following is a 1023-amino-acid chain: Sodium/potassium-transporting ATPase subunit alpha-1 (1023 aa).

A propeptide spanning residues 1-5 (MGLGK) is cleaved from the precursor. Residues 1 to 11 (MGLGKGKDEYK) are compositionally biased toward basic and acidic residues. The tract at residues 1 to 33 (MGLGKGKDEYKLAATSEDGGKKDKKAKAKKDMD) is disordered. Residues 6–87 (GKDEYKLAAT…NALTPPPTTP (82 aa)) lie on the Cytoplasmic side of the membrane. The residue at position 16 (Ser16) is a Phosphoserine; by PKC. The segment at 82-84 (PPP) is interaction with phosphoinositide-3 kinase. The helical transmembrane segment at 88–108 (EWVKFCKQLFGGFSMLLWIGA) threads the bilayer. The Extracellular portion of the chain corresponds to 109-131 (ILCFLAYGIQAASEDEPANDNLY). Residues 132–152 (LGIVLSAVVIITGCFSYYQEA) traverse the membrane as a helical segment. Topologically, residues 153–288 (KSSKIMESFK…GGKTPIAIEI (136 aa)) are cytoplasmic. The segment at 216–237 (SSLTGESEPQTRSPDFSNENPL) is disordered. The chain crosses the membrane as a helical span at residues 289-308 (EHFIHIITGVAVFLGVSFFI). Topologically, residues 309-320 (LSLILGYNWLEA) are extracellular. Residues 321–338 (VIFLIGIIVANVPEGLLA) traverse the membrane as a helical segment. At 339-772 (TVTVCLTLTA…EEGRLIFDNL (434 aa)) the chain is on the cytoplasmic side. Asp376 functions as the 4-aspartylphosphate intermediate in the catalytic mechanism. Lys487 serves as a coordination point for ATP. The Mg(2+) site is built by Asp717 and Asp721. A helical membrane pass occupies residues 773-792 (KKSIAYTLTSNIPEISPFLL). At 793–802 (FIIANIPLPL) the chain is on the extracellular side. The chain crosses the membrane as a helical span at residues 803 to 823 (GTVTILCIDLGTDMVPAISLA). The Cytoplasmic portion of the chain corresponds to 824 to 843 (YEKAESDIMKRQPRNPKTDK). Residues 844–866 (LVNERLISIAYGQIGMMQATAGF) traverse the membrane as a helical segment. The Extracellular portion of the chain corresponds to 867 to 918 (FTYFVILAENGFLPMDLIGVRVLWDDKYVNDLEDSYGQQWTYERRKIVEYSC). Residues 919–938 (HTAFFASIVIVQWADLIICK) traverse the membrane as a helical segment. Residues 939 to 951 (TRRNSIVQQGMTN) lie on the Cytoplasmic side of the membrane. Ser943 is subject to Phosphoserine; by PKA. A helical transmembrane segment spans residues 952–970 (RILIFGLFEETALAAFLSY). Residues 971–985 (CPGMDVALRMYPMKP) are Extracellular-facing. The helical transmembrane segment at 986 to 1006 (LWWFCAFPYSLLIFLYDEARR) threads the bilayer. Topologically, residues 1007–1023 (YILRRNPGGWVEKETYY) are cytoplasmic.

This sequence belongs to the cation transport ATPase (P-type) (TC 3.A.3) family. Type IIC subfamily. The sodium/potassium-transporting ATPase is composed of a catalytic alpha subunit, an auxiliary non-catalytic beta subunit and an additional regulatory subunit.

Its subcellular location is the cell membrane. It localises to the sarcolemma. It carries out the reaction K(+)(out) + Na(+)(in) + ATP + H2O = K(+)(in) + Na(+)(out) + ADP + phosphate + H(+). In terms of biological role, this is the catalytic component of the active enzyme, which catalyzes the hydrolysis of ATP coupled with the exchange of sodium and potassium ions across the plasma membrane. This action creates the electrochemical gradient of sodium and potassium ions, providing the energy for active transport of various nutrients. In Oreochromis mossambicus (Mozambique tilapia), this protein is Sodium/potassium-transporting ATPase subunit alpha-1 (atp1a1).